A 66-amino-acid polypeptide reads, in one-letter code: Large ribosomal subunit protein bL33c (66 aa).

The protein belongs to the bacterial ribosomal protein bL33 family.

It is found in the plastid. The protein localises to the chloroplast. The polypeptide is Large ribosomal subunit protein bL33c (Populus alba (White poplar)).